A 363-amino-acid polypeptide reads, in one-letter code: Chorismate synthase (363 aa).

Arginine 47 contributes to the NADP(+) binding site. FMN contacts are provided by residues 124–126, glycine 286, 301–305, and arginine 327; these read RAS and KPTAT.

This sequence belongs to the chorismate synthase family. As to quaternary structure, homotetramer. Requires FMNH2 as cofactor.

It carries out the reaction 5-O-(1-carboxyvinyl)-3-phosphoshikimate = chorismate + phosphate. It functions in the pathway metabolic intermediate biosynthesis; chorismate biosynthesis; chorismate from D-erythrose 4-phosphate and phosphoenolpyruvate: step 7/7. Its function is as follows. Catalyzes the anti-1,4-elimination of the C-3 phosphate and the C-6 proR hydrogen from 5-enolpyruvylshikimate-3-phosphate (EPSP) to yield chorismate, which is the branch point compound that serves as the starting substrate for the three terminal pathways of aromatic amino acid biosynthesis. This reaction introduces a second double bond into the aromatic ring system. This is Chorismate synthase from Prochlorococcus marinus (strain MIT 9211).